Reading from the N-terminus, the 102-residue chain is Carboxysome shell protein CcmK3 (102 aa).

The BMC domain occupies 4-90 (AVGVIQTDGF…PPDNVETVMP (87 aa)).

Belongs to the bacterial microcompartments protein family. CcmK subfamily. Interacts stably with CcmK4, forming heterohexamers that can make dodecamers. Heterohexamers have a 1:2 CcmK3:CcmK4 stoichiometry. Upon expression in E.coli forms oligomers that could be dimers or trimers, but never hexamers; bulky residues in the pore region probably preclude the formation of homohexamers.

It localises to the carboxysome. A probably non-essential, minor shell protein of the carboxysome, a polyhedral inclusion where RuBisCO (ribulose bisphosphate carboxylase, rbcL-rbcS) is sequestered. Hexamers form sheets that form the facets of the polyhedral carboxysome. In PCC 7418 there are several CcmK paralogs with presumably functional differences. This subunit probably only makes heterohexamers with CcmK4. Heterohexamers can also make dodecamers, formation depends on buffer conditions. This is Carboxysome shell protein CcmK3 from Halothece sp. (strain PCC 7418) (Synechococcus sp. (strain PCC 7418)).